Here is a 375-residue protein sequence, read N- to C-terminus: Probable sugar phosphate/phosphate translocator At3g17430 (375 aa).

10 helical membrane passes run 9–29 (LVLT…VILY), 43–63 (LPIT…FLLI), 76–96 (FEIY…SLWF), 106–126 (VAFI…MAVV), 140–160 (MLLV…FNIV), 163–183 (VYQV…QVLL), 193–213 (ITSL…PWYV), 229–249 (WIFF…FLVI), 257–276 (IRVA…TVIF), and 280–302 (TITG…YNYI). A disordered region spans residues 328–348 (EKKSSDKFNPNDSVEIPRVGG).

The protein belongs to the TPT transporter family. TPT (TC 2.A.7.9) subfamily.

Its subcellular location is the membrane. The chain is Probable sugar phosphate/phosphate translocator At3g17430 from Arabidopsis thaliana (Mouse-ear cress).